A 115-amino-acid polypeptide reads, in one-letter code: Nucleoid-associated protein Ccel_0243 (115 aa).

This sequence belongs to the YbaB/EbfC family. In terms of assembly, homodimer.

It is found in the cytoplasm. The protein resides in the nucleoid. Its function is as follows. Binds to DNA and alters its conformation. May be involved in regulation of gene expression, nucleoid organization and DNA protection. The polypeptide is Nucleoid-associated protein Ccel_0243 (Ruminiclostridium cellulolyticum (strain ATCC 35319 / DSM 5812 / JCM 6584 / H10) (Clostridium cellulolyticum)).